A 358-amino-acid chain; its full sequence is E3 ubiquitin-protein ligase RFI2 (358 aa).

Positions 1–34 (MAGAKDSGCDDDLRIAGGCDPGKRGNPEDSSSPV) are disordered. The RING-type; atypical zinc-finger motif lies at 38-83 (CSICLESVLDDGTRSKAKLQCGHQFHLDCIGSAFNMKGAMQCPNCR). 2 disordered regions span residues 174 to 201 (GPAATPRTSDNNSTDDHPWNSHSNDHFH) and 248 to 313 (SNQR…DQNV). Residues 187–201 (TDDHPWNSHSNDHFH) show a composition bias toward basic and acidic residues. The segment covering 248–266 (SNQRSSPAINSYQGSSTQM) has biased composition (polar residues). Residues 299 to 309 (LPPPPPPPPMP) show a composition bias toward pro residues.

The protein resides in the nucleus. The enzyme catalyses S-ubiquitinyl-[E2 ubiquitin-conjugating enzyme]-L-cysteine + [acceptor protein]-L-lysine = [E2 ubiquitin-conjugating enzyme]-L-cysteine + N(6)-ubiquitinyl-[acceptor protein]-L-lysine.. It functions in the pathway protein modification; protein ubiquitination. In terms of biological role, mediates phytochrome (phyA and phyB)-controlled seedling deetiolation responses such as hypocotyl elongation in response to red and far-red light. Required for light-induced expression of LHCB3 and CHALCONE SYNTHASE (CHS). Negatively regulates CONSTANS (CO) and FLOWERING LOCUS T (FT) expression and photoperiodic flowering. The protein is E3 ubiquitin-protein ligase RFI2 of Arabidopsis thaliana (Mouse-ear cress).